We begin with the raw amino-acid sequence, 116 residues long: Large ribosomal subunit protein uL18 (116 aa).

The protein belongs to the universal ribosomal protein uL18 family. In terms of assembly, part of the 50S ribosomal subunit; part of the 5S rRNA/L5/L18/L25 subcomplex. Contacts the 5S and 23S rRNAs.

Functionally, this is one of the proteins that bind and probably mediate the attachment of the 5S RNA into the large ribosomal subunit, where it forms part of the central protuberance. This Shewanella sp. (strain ANA-3) protein is Large ribosomal subunit protein uL18.